A 312-amino-acid polypeptide reads, in one-letter code: D-alanine--D-alanine ligase (312 aa).

The ATP-grasp domain maps to 103-303 (KQQLVPHGIR…YADLVQAIVD (201 aa)). 130-186 (MPRPYVLKPVNEGSSVGVAIIKERDNHGVPIHRDSHGPWQTFATLLAEPFIRGRELT) is a binding site for ATP. Positions 254, 270, and 272 each coordinate Mg(2+).

This sequence belongs to the D-alanine--D-alanine ligase family. It depends on Mg(2+) as a cofactor. Mn(2+) serves as cofactor.

Its subcellular location is the cytoplasm. It carries out the reaction 2 D-alanine + ATP = D-alanyl-D-alanine + ADP + phosphate + H(+). It participates in cell wall biogenesis; peptidoglycan biosynthesis. In terms of biological role, cell wall formation. In Rhizorhabdus wittichii (strain DSM 6014 / CCUG 31198 / JCM 15750 / NBRC 105917 / EY 4224 / RW1) (Sphingomonas wittichii), this protein is D-alanine--D-alanine ligase.